We begin with the raw amino-acid sequence, 158 residues long: 6,7-dimethyl-8-ribityllumazine synthase (158 aa).

Residues Phe22, 57–59 (AVE), and 81–83 (AVI) contribute to the 5-amino-6-(D-ribitylamino)uracil site. A (2S)-2-hydroxy-3-oxobutyl phosphate-binding site is contributed by 86–87 (GT). His89 (proton donor) is an active-site residue. Phe114 contacts 5-amino-6-(D-ribitylamino)uracil. Arg128 provides a ligand contact to (2S)-2-hydroxy-3-oxobutyl phosphate.

It belongs to the DMRL synthase family. In terms of assembly, forms an icosahedral capsid composed of 60 subunits, arranged as a dodecamer of pentamers.

It carries out the reaction (2S)-2-hydroxy-3-oxobutyl phosphate + 5-amino-6-(D-ribitylamino)uracil = 6,7-dimethyl-8-(1-D-ribityl)lumazine + phosphate + 2 H2O + H(+). The protein operates within cofactor biosynthesis; riboflavin biosynthesis; riboflavin from 2-hydroxy-3-oxobutyl phosphate and 5-amino-6-(D-ribitylamino)uracil: step 1/2. Catalyzes the formation of 6,7-dimethyl-8-ribityllumazine by condensation of 5-amino-6-(D-ribitylamino)uracil with 3,4-dihydroxy-2-butanone 4-phosphate. This is the penultimate step in the biosynthesis of riboflavin. In Shewanella putrefaciens (strain CN-32 / ATCC BAA-453), this protein is 6,7-dimethyl-8-ribityllumazine synthase.